Here is a 139-residue protein sequence, read N- to C-terminus: Large ribosomal subunit protein uL16 (139 aa).

Positions 1-20 are enriched in basic residues; that stretch reads MLMPRRVKHRKQHHPTRRGA. The segment at 1–24 is disordered; it reads MLMPRRVKHRKQHHPTRRGAAKGG.

Belongs to the universal ribosomal protein uL16 family. Part of the 50S ribosomal subunit.

Functionally, binds 23S rRNA and is also seen to make contacts with the A and possibly P site tRNAs. In Nocardioides sp. (strain ATCC BAA-499 / JS614), this protein is Large ribosomal subunit protein uL16.